We begin with the raw amino-acid sequence, 160 residues long: Putative NrdI-like protein (160 aa).

This sequence belongs to the NrdI family.

The sequence is that of Putative NrdI-like protein from Streptococcus pyogenes serotype M3 (strain ATCC BAA-595 / MGAS315).